The chain runs to 330 residues: Phenylalanine--tRNA ligase alpha subunit (330 aa).

Position 254 (Glu254) interacts with Mg(2+).

Belongs to the class-II aminoacyl-tRNA synthetase family. Phe-tRNA synthetase alpha subunit type 1 subfamily. As to quaternary structure, tetramer of two alpha and two beta subunits. Mg(2+) serves as cofactor.

Its subcellular location is the cytoplasm. The enzyme catalyses tRNA(Phe) + L-phenylalanine + ATP = L-phenylalanyl-tRNA(Phe) + AMP + diphosphate + H(+). This Neisseria meningitidis serogroup A / serotype 4A (strain DSM 15465 / Z2491) protein is Phenylalanine--tRNA ligase alpha subunit (pheS).